The sequence spans 1415 residues: Uveal autoantigen with coiled-coil domains and ankyrin repeats (1415 aa).

5 ANK repeats span residues 69 to 98, 102 to 131, 135 to 164, 168 to 197, and 201 to 230; these read EGRS…DITT, AGRN…PTEH, QGRT…SVNA, DGRT…EINS, and QNRT…DVSL. Residues 288–376 adopt a coiled-coil conformation; sequence VKSSQREHRN…TIESLKNRFK (89 aa). The stretch at 617 to 646 is one ANK 6 repeat; the sequence is ELLAKLTLSVPTEKFESMKSLLSSEVNEKV. Positions 759-1381 form a coiled coil; it reads TVEELKKQLL…TDRQHQEVIA (623 aa). Lys-1034 participates in a covalent cross-link: Glycyl lysine isopeptide (Lys-Gly) (interchain with G-Cter in SUMO2). Over residues 1186 to 1201 the composition is skewed to basic and acidic residues; it reads LREKEEESQNKTEEVS. The interval 1186–1205 is disordered; that stretch reads LREKEEESQNKTEEVSKLQS.

In terms of assembly, component of the apoptosome complex, composed of APAF1, pro-caspase-9 and UACA. In the complex, it probably interacts directly with APAF1. Interacts with LGALS3, ARF6 and ACTB. Interacts with RAB39A. As to expression, highly expressed in adrenal, testis, kidney and large intestine.

The protein localises to the nucleus. It is found in the cytoplasm. Its subcellular location is the cytoskeleton. Its function is as follows. Regulates APAF1 expression and plays an important role in the regulation of stress-induced apoptosis. Promotes apoptosis by regulating three pathways, apoptosome up-regulation, LGALS3/galectin-3 down-regulation and NF-kappa-B inactivation. Regulates the redistribution of APAF1 into the nucleus after proapoptotic stress. Down-regulates the expression of LGALS3 by inhibiting NFKB1. Modulates isoactin dynamics to regulate the morphological alterations required for cell growth and motility. Interaction with ARF6 may modulate cell shape and motility after injury. May be involved in multiple neurite formation. The chain is Uveal autoantigen with coiled-coil domains and ankyrin repeats (UACA) from Canis lupus familiaris (Dog).